We begin with the raw amino-acid sequence, 357 residues long: CD4+ T-cell-stimulating antigen (357 aa).

The N-terminal stretch at 1 to 22 (MKKRTFALALSMIIASGVVLGA) is a signal peptide. Cysteine 23 is lipidated: N-palmitoyl cysteine. A lipid anchor (S-diacylglycerol cysteine) is attached at cysteine 23.

It belongs to the BMP lipoprotein family.

The protein resides in the cell membrane. This Listeria innocua serovar 6a (strain ATCC BAA-680 / CLIP 11262) protein is CD4+ T-cell-stimulating antigen (tcsA).